The following is a 267-amino-acid chain: Glutamate racemase (267 aa).

Substrate is bound by residues 13–14 and 45–46; these read DS and YS. The active-site Proton donor/acceptor is the Cys77. A substrate-binding site is contributed by 78 to 79; sequence NT. Cys188 serves as the catalytic Proton donor/acceptor. 189–190 is a substrate binding site; it reads TH.

The protein belongs to the aspartate/glutamate racemases family.

It catalyses the reaction L-glutamate = D-glutamate. The protein operates within cell wall biogenesis; peptidoglycan biosynthesis. Functionally, provides the (R)-glutamate required for cell wall biosynthesis. This chain is Glutamate racemase, found in Histophilus somni (strain 2336) (Haemophilus somnus).